A 216-amino-acid polypeptide reads, in one-letter code: Kynurenine formamidase (216 aa).

Residue Trp25 coordinates substrate. The Zn(2+) site is built by His55, His59, and Asp61. His65 acts as the Proton donor/acceptor in catalysis. Zn(2+) contacts are provided by His167 and Glu179.

The protein belongs to the Cyclase 1 superfamily. KynB family. As to quaternary structure, homodimer. It depends on Zn(2+) as a cofactor.

It carries out the reaction N-formyl-L-kynurenine + H2O = L-kynurenine + formate + H(+). The protein operates within amino-acid degradation; L-tryptophan degradation via kynurenine pathway; L-kynurenine from L-tryptophan: step 2/2. In terms of biological role, catalyzes the hydrolysis of N-formyl-L-kynurenine to L-kynurenine, the second step in the kynurenine pathway of tryptophan degradation. In Cupriavidus taiwanensis (strain DSM 17343 / BCRC 17206 / CCUG 44338 / CIP 107171 / LMG 19424 / R1) (Ralstonia taiwanensis (strain LMG 19424)), this protein is Kynurenine formamidase.